The chain runs to 333 residues: Ornithine carbamoyltransferase (333 aa).

Residues 57–60 (STRT), Gln83, Arg107, and 134–137 (HPTQ) contribute to the carbamoyl phosphate site. L-ornithine-binding positions include Asn168, Asp232, and 236 to 237 (SM). Residues 274–275 (CL) and Arg319 each bind carbamoyl phosphate.

It belongs to the aspartate/ornithine carbamoyltransferase superfamily. OTCase family.

The protein localises to the cytoplasm. It catalyses the reaction carbamoyl phosphate + L-ornithine = L-citrulline + phosphate + H(+). It participates in amino-acid biosynthesis; L-arginine biosynthesis; L-arginine from L-ornithine and carbamoyl phosphate: step 1/3. Its function is as follows. Reversibly catalyzes the transfer of the carbamoyl group from carbamoyl phosphate (CP) to the N(epsilon) atom of ornithine (ORN) to produce L-citrulline. The chain is Ornithine carbamoyltransferase from Photobacterium profundum (strain SS9).